The sequence spans 500 residues: Versicolorin B desaturase (500 aa).

Residues F3 to G23 form a helical membrane-spanning segment. Residues N243 and N400 are each glycosylated (N-linked (GlcNAc...) asparagine). C438 is a binding site for heme.

Belongs to the cytochrome P450 family. Requires heme as cofactor.

The protein resides in the membrane. The enzyme catalyses versicolorin B + NADPH + O2 + H(+) = versicolorin A + NADP(+) + 2 H2O. The protein operates within mycotoxin biosynthesis; aflatoxin biosynthesis. Versicolorin B desaturase; part of the gene cluster that mediates the biosynthesis of aflatoxins, a group of polyketide-derived furanocoumarins, and part of the most toxic and carcinogenic compounds among the known mycotoxins. The four major aflatoxins produced by A.parasiticus are aflatoxin B1 (AFB1), aflatoxin B2 (AFB2), aflatoxin G1 (AFG1) and aflatoxin G2 (AFG2). Within the aflatoxin pathway, the versicolorin B desaturase aflL catalyzes the conversion of versicolorin B (VERB) to versicolorin A (VERA). The biosynthesis of aflatoxins begins with the norsolorinic acid synthase aflC that combines a hexanoyl starter unit produced by the fatty acid synthase aflA/aflB and 7 malonyl-CoA extender units to synthesize the precursor NOR. The second step is the conversion of NOR to averantin and requires the norsolorinic acid ketoreductase aflD, which catalyzes the dehydration of norsolorinic acid to form (1'S)-averantin. The norsolorinic acid reductases aflE and aflF may also play a role in the conversion of NOR to AVN. The cytochrome P450 monooxygenase aflG then catalyzes the hydroxylation of AVN to 5'hydroxyaverantin (HAVN). The next step is performed by the 5'-hydroxyaverantin dehydrogenase aflH that transforms HAVN to 5'-oxoaverantin (OAVN) which is further converted to averufin (AVF) by aflK that plays a dual role in the pathway, as a 5'-oxoaverantin cyclase that mediates conversion of 5'-oxoaverantin, as well as a versicolorin B synthase in a later step in the pathway. The averufin oxidase aflI catalyzes the conversion of AVF to versiconal hemiacetal acetate (VHA). VHA is then the substrate for the versiconal hemiacetal acetate esterase aflJ to yield versiconal (VAL). Versicolorin B synthase aflK then converts VAL to versicolorin B (VERB) by closing the bisfuran ring of aflatoxin which is required for DNA-binding, thus giving to aflatoxin its activity as a mutagen. Then, the activity of the versicolorin B desaturase aflL leads to versicolorin A (VERA). A branch point starts from VERB since it can also be converted to dihydrodemethylsterigmatocystin (DMDHST), probably also by aflL, VERA being a precursor for aflatoxins B1 and G1, and DMDHST for aflatoxins B2 and G2. Next, the versicolorin reductase aflM and the cytochrome P450 monooxygenase aflN are involved in conversion of VERA to demethylsterigmatocystin (DMST). AflX and aflY seem also involved in this step, through probable aflX-mediated epoxide ring-opening step following versicolorin A oxidation and aflY-mediated Baeyer-Villiger oxidation required for the formation of the xanthone ring. The methyltransferase aflO then leads to the modification of DMST to sterigmatocystin (ST), and of DMDHST to dihydrosterigmatocystin (DHST). Both ST and DHST are then substrates of the O-methyltransferase aflP to yield O-methylsterigmatocystin (OMST) and dihydro-O-methylsterigmatocystin (DHOMST), respectively. Finally OMST is converted to aflatoxins B1 and G1, and DHOMST to aflatoxins B2 and G2, via the action of several enzymes including O-methylsterigmatocystin oxidoreductase aflQ, the cytochrome P450 monooxygenase aflU, but also the NADH-dependent flavin oxidoreductase nadA which is specifically required for the synthesis of AFG1. The polypeptide is Versicolorin B desaturase (Aspergillus parasiticus (strain ATCC 56775 / NRRL 5862 / SRRC 143 / SU-1)).